The primary structure comprises 238 residues: Capsular polysaccharide phosphotransferase eps5J (238 aa).

It belongs to the stealth family.

This chain is Capsular polysaccharide phosphotransferase eps5J (eps5J), found in Streptococcus thermophilus.